A 392-amino-acid polypeptide reads, in one-letter code: Putative cystathionine gamma-lyase 2 (392 aa).

Positions 32-55 are disordered; that stretch reads LSSTYKQDNPGEPKGHDYSRAGNP. A compositionally biased stretch (basic and acidic residues) spans 40-50; that stretch reads NPGEPKGHDYS. Substrate is bound by residues Arg-51, Tyr-103, and Arg-108. Lys-203 is subject to N6-(pyridoxal phosphate)lysine. Glu-330 lines the substrate pocket.

This sequence belongs to the trans-sulfuration enzymes family. Pyridoxal 5'-phosphate is required as a cofactor.

It localises to the cytoplasm. The enzyme catalyses L,L-cystathionine + H2O = 2-oxobutanoate + L-cysteine + NH4(+). It functions in the pathway amino-acid biosynthesis; L-cysteine biosynthesis; L-cysteine from L-homocysteine and L-serine: step 2/2. The protein is Putative cystathionine gamma-lyase 2 (cth-2) of Caenorhabditis elegans.